The primary structure comprises 345 residues: Trace amine-associated receptor 6 (345 aa).

The Extracellular segment spans residues 1-32; the sequence is MSSNSSLLVAVQLCYANVNGSCVKIPFSPGSR. N4 and N19 each carry an N-linked (GlcNAc...) asparagine glycan. 2 disulfides stabilise this stretch: C22–C186 and C105–C190. Residues 33–53 form a helical membrane-spanning segment; that stretch reads VILYIVFGFGAVLAVFGNLLV. Residues 54–68 lie on the Cytoplasmic side of the membrane; that stretch reads MISILHFKQLHSPTN. A helical membrane pass occupies residues 69–89; sequence FLVASLACADFLVGVTVMPFS. Over 90 to 107 the chain is Extracellular; it reads MVRTVESCWYFGRSFCTF. The chain crosses the membrane as a helical span at residues 108 to 128; sequence HTCCDVAFCYSSLFHLCFISI. Over 129 to 147 the chain is Cytoplasmic; it reads DRYIAVTDPLVYPTKFTVS. A helical membrane pass occupies residues 148–168; the sequence is VSGICISVSWILPLMYSGAVF. At 169-202 the chain is on the extracellular side; it reads YTGVYDDGLEELSDALNCIGGCQTVVNQNWVLTD. The chain crosses the membrane as a helical span at residues 203-223; it reads FLSFFIPTFIMIILYGNIFLV. Residues 224–259 lie on the Cytoplasmic side of the membrane; it reads ARRQAKKIENTGSKTESSSESYKARVARRERKAAKT. A helical transmembrane segment spans residues 260-276; the sequence is LGVTVVAFMISWLPYSI. Residues 277-282 are Extracellular-facing; that stretch reads DSLIDA. The chain crosses the membrane as a helical span at residues 283–302; that stretch reads FMGFITPACIYEICCWCAYY. Over 303 to 345 the chain is Cytoplasmic; it reads NSAMNPLIYALFYPWFRKAIKVIVTGQVLKNSSATMNLFSEHI.

This sequence belongs to the G-protein coupled receptor 1 family. Expressed at low abundance in various brain tissues, as well as in fetal liver, but not in the cerebellum or placenta. In the brain, comparable levels of expression in basal ganglia, frontal cortex, substantia nigra, amygdala and hippocampus, highest expression in hippocampus and lowest expression in basal ganglia.

The protein localises to the cell membrane. Functionally, olfactory receptor specific for trace amines, such as beta-phenylethylamine (beta-PEA). Trace amine compounds are enriched in animal body fluids and act on trace amine-associated receptors (TAARs) to elicit both intraspecific and interspecific innate behaviors. Beta-PEA-binding causes a conformation change that triggers signaling via G(s)-class of G alpha proteins (GNAL or GNAS). The sequence is that of Trace amine-associated receptor 6 from Homo sapiens (Human).